A 499-amino-acid polypeptide reads, in one-letter code: Potassium voltage-gated channel subfamily A member 2 (499 aa).

The disordered stretch occupies residues 1–26 (MTVATGDPADEAAALPGHPQDTYDPE). A tetramerization domain region spans residues 1-125 (MTVATGDPAD…YELGEEAMEM (125 aa)). The Cytoplasmic portion of the chain corresponds to 1–160 (MTVATGDPAD…LLFEYPESSG (160 aa)). Residues 161–182 (PARIIAIVSVMVILISIVSFCL) form a helical membrane-spanning segment. Residues 183-221 (ETLPIFRDENEDMHGSGVTFHTYSNSTIGYQQSTSFTDP) lie on the Extracellular side of the membrane. N207 carries N-linked (GlcNAc...) asparagine glycosylation. A helical membrane pass occupies residues 222 to 243 (FFIVETLCIIWFSFEFLVRFFA). C244 carries the S-palmitoyl cysteine lipid modification. The Cytoplasmic segment spans residues 244 to 254 (CPSKAGFFTNI). A helical membrane pass occupies residues 255–275 (MNIIDIVAIIPYFITLGTELA). The Extracellular segment spans residues 276–289 (EKPEDAQQGQQAMS). Residues 290–310 (LAILRVIRLVRVFRIFKLSRH) traverse the membrane as a helical; Voltage-sensor segment. Topologically, residues 311–325 (SKGLQILGQTLKASM) are cytoplasmic. The S4-S5 linker stretch occupies residues 312–325 (KGLQILGQTLKASM). A helical transmembrane segment spans residues 326–347 (RELGLLIFFLFIGVILFSSAVY). The Extracellular portion of the chain corresponds to 348–361 (FAEADERESQFPSI). The segment at residues 362-373 (PDAFWWAVVSMT) is an intramembrane region (helical). The Selectivity filter motif lies at 374–379 (TVGYGD). The stretch at 374 to 381 (TVGYGDMV) is an intramembrane region. The Extracellular portion of the chain corresponds to 382 to 388 (PTTIGGK). The chain crosses the membrane as a helical span at residues 389 to 417 (IVGSLCAIAGVLTIALPVPVIVSNFNYFY). Residues 418-499 (HRETEGEEQA…VNITKMLTDV (82 aa)) are Cytoplasmic-facing. Y429 bears the Phosphotyrosine mark. 4 positions are modified to phosphoserine: S434, S440, S441, and S449. Y458 bears the Phosphotyrosine mark. S468 is subject to Phosphoserine. The PDZ-binding motif lies at 497-499 (TDV).

The protein belongs to the potassium channel family. A (Shaker) (TC 1.A.1.2) subfamily. Kv1.2/KCNA2 sub-subfamily. Homotetramer and heterotetramer with other channel-forming alpha subunits, such as KCNA1, KCNA4, KCNA5, KCNA6 and KCNA7. Channel activity is regulated by interaction with the beta subunits, including KCNAB1 and KCNAB2. Identified in a complex with KCNA1 and KCNAB2. Identified in a complex with KCNA5 and KCNAB1. Identified in a complex with KCNA4 and FYN. Interacts with the beta subunit KCNAB1. Interacts with PTK2B. Interacts (via C-terminus) with CTTN. Interacts (via N-terminal cytoplasmic domain) with RHOA (GTP-bound form); this regulates channel activity by reducing location at the cell surface in response to CHRM1 activation. Interacts with DRD2. Interacts with SIGMAR1; cocaine consumption leads to increased interaction. Interacts with ADAM22. Interacts (via C-terminus) with the PDZ domains of DLG1, DLG2 and DLG4. Interacts with CNTNAP2. Interacts with ADAM11. Interacts with LYNX1. Phosphorylated on tyrosine residues; phosphorylation increases in response to ischemia. Phosphorylated on tyrosine residues by activated PTK2B/PYK2. Phosphorylation on tyrosine residues suppresses ion channel activity. Phosphorylated on tyrosine residues in response to CHRM1 activation; this abolishes interaction with CTTN. This is probably due to endocytosis of the phosphorylated channel subunits. Phosphorylated on serine residues in response to increased cAMP levels; phosphorylation is apparently not catalyzed by PKA. Post-translationally, N-glycosylated, with complex, sialylated N-glycans. As to expression, detected in brain cortex. Detected in peroneal nerve in the juxtaparanodal regions of the node of Ranvier; expression is decreased in patients with diabetes mellitus that suffer from axonal neuropathy. Detected in paranodal and juxtanodal zones in myelinated spinal cord (at protein level).

The protein localises to the cell membrane. It localises to the membrane. The protein resides in the cell projection. It is found in the axon. Its subcellular location is the synapse. The protein localises to the endoplasmic reticulum membrane. It localises to the lamellipodium membrane. The protein resides in the synaptosome. It is found in the presynaptic cell membrane. Its subcellular location is the dendrite. The protein localises to the cell junction. It localises to the paranodal septate junction. It carries out the reaction K(+)(in) = K(+)(out). Its activity is regulated as follows. Inhibited by 4-aminopyridine (4-AP) and charybdotoxin (CTX), but not by tetraethylammonium (TEA). Inhibited by dendrotoxin (DTX). Inhibited by tityustoxin-K alpha (TsTX-Kalpha), a toxin that is highly specific for KCNA2. Inhibited by maurotoxin. Inhibited by kappaM conotoxins kappaM-RIIIJ and kappaM-RIIIK; kappaM-RIIIJ has much higher affinity for channels containing KCNA2 than kappaM-RIIIK, with the exception of heterodimers formed by KCNA2 and KCNA7 where the opposite is true. Voltage-gated potassium channel that mediates transmembrane potassium transport in excitable membranes, primarily in the brain and the central nervous system, but also in the cardiovascular system. Prevents aberrant action potential firing and regulates neuronal output. Forms tetrameric potassium-selective channels through which potassium ions pass in accordance with their electrochemical gradient. The channel alternates between opened and closed conformations in response to the voltage difference across the membrane. Can form functional homotetrameric channels and heterotetrameric channels that contain variable proportions of KCNA1, KCNA2, KCNA4, KCNA5, KCNA6, KCNA7, and possibly other family members as well; channel properties depend on the type of alpha subunits that are part of the channel. Channel properties are modulated by cytoplasmic beta subunits that regulate the subcellular location of the alpha subunits and promote rapid inactivation of delayed rectifier potassium channels. In vivo, membranes probably contain a mixture of heteromeric potassium channel complexes, making it difficult to assign currents observed in intact tissues to any particular potassium channel family member. Homotetrameric KCNA2 forms a delayed-rectifier potassium channel that opens in response to membrane depolarization, followed by slow spontaneous channel closure. In contrast, a heteromultimer formed by KCNA2 and KCNA4 shows rapid inactivation. Regulates neuronal excitability and plays a role as pacemaker in the regulation of neuronal action potentials. KCNA2-containing channels play a presynaptic role and prevent hyperexcitability and aberrant action potential firing. Response to toxins that are selective for KCNA2-containing potassium channels suggests that in Purkinje cells, dendritic subthreshold KCNA2-containing potassium channels prevent random spontaneous calcium spikes, suppressing dendritic hyperexcitability without hindering the generation of somatic action potentials, and thereby play an important role in motor coordination. Plays a role in the induction of long-term potentiation of neuron excitability in the CA3 layer of the hippocampus. May function as down-stream effector for G protein-coupled receptors and inhibit GABAergic inputs to basolateral amygdala neurons. May contribute to the regulation of neurotransmitter release, such as gamma-aminobutyric acid (GABA). Contributes to the regulation of the axonal release of the neurotransmitter dopamine. Reduced KCNA2 expression plays a role in the perception of neuropathic pain after peripheral nerve injury, but not acute pain. Plays a role in the regulation of the time spent in non-rapid eye movement (NREM) sleep. This is Potassium voltage-gated channel subfamily A member 2 (KCNA2) from Homo sapiens (Human).